Here is a 1061-residue protein sequence, read N- to C-terminus: Isoleucine--tRNA ligase (1061 aa).

Residues 50–60 (PYTSGSAHMGT) carry the 'HIGH' region motif. Positions 604-608 (KMSKS) match the 'KMSKS' region motif. ATP is bound at residue Lys-607.

The protein belongs to the class-I aminoacyl-tRNA synthetase family. IleS type 2 subfamily. As to quaternary structure, monomer. It depends on Zn(2+) as a cofactor.

The protein localises to the cytoplasm. The catalysed reaction is tRNA(Ile) + L-isoleucine + ATP = L-isoleucyl-tRNA(Ile) + AMP + diphosphate. Functionally, catalyzes the attachment of isoleucine to tRNA(Ile). As IleRS can inadvertently accommodate and process structurally similar amino acids such as valine, to avoid such errors it has two additional distinct tRNA(Ile)-dependent editing activities. One activity is designated as 'pretransfer' editing and involves the hydrolysis of activated Val-AMP. The other activity is designated 'posttransfer' editing and involves deacylation of mischarged Val-tRNA(Ile). This is Isoleucine--tRNA ligase from Natronomonas pharaonis (strain ATCC 35678 / DSM 2160 / CIP 103997 / JCM 8858 / NBRC 14720 / NCIMB 2260 / Gabara) (Halobacterium pharaonis).